Consider the following 402-residue polypeptide: MVAIVTLTRQVLLTIALALFAQGAAIPEEAAKRDDNPGFVALDFDVLRKPLNLTEALLREKRDSISLSLINEGPSYASKVSVGSNKQQQTVIIDTGSSDFWVVDSNAQCGKGVDCKSSGTFTPSSSSSYKNLGAAFTIRYGDGSTSQGTWGKDTVTINGVSITGQQIADVTQTSVDQGILGIGYTSNEAVYDTSGRQTTPNYDNVPVTLKKQGKIRTNAYSLYLNSPSAETGTIIFGGVDNAKYSGKLVAEQVTSSQPLTISLASVNLKGSSFSFGDGALLDSGTTLTYFPSDFAAQLADKAGARLVQVARDQYLYFIDCNTDTSGTTVFNFGNGAKITVPNTEYVYQNGDGTCLWGIQPSDDTILGDNFLRHAYYLLYNLDANTISIAQVKYTTDSSISAV.

A signal peptide (or 18, or 21) is located at residues 1–25; sequence MVAIVTLTRQVLLTIALALFAQGAA. Residues 26–62 constitute a propeptide, activation peptide; that stretch reads IPEEAAKRDDNPGFVALDFDVLRKPLNLTEALLREKR. N-linked (GlcNAc...) asparagine glycosylation occurs at Asn52. The Peptidase A1 domain maps to 76-389; sequence YASKVSVGSN…NLDANTISIA (314 aa). Asp94 is a catalytic residue. The cysteines at positions 109 and 115 are disulfide-linked. Asp282 is an active-site residue. An intrachain disulfide couples Cys320 to Cys354.

This sequence belongs to the peptidase A1 family. In terms of processing, O-glycosylated.

It localises to the secreted. It catalyses the reaction Preferential cleavage at the carboxyl of hydrophobic amino acids, but fails to cleave 15-Leu-|-Tyr-16, 16-Tyr-|-Leu-17 and 24-Phe-|-Phe-25 of insulin B chain. Activates trypsinogen, and degrades keratin.. The chain is Candidapepsin-1 (SAPP1) from Candida parapsilosis (Yeast).